A 198-amino-acid chain; its full sequence is dCTP deaminase (198 aa).

Residues 99 to 104 (RSSLGR), 125 to 127 (TLE), and Gln144 contribute to the dCTP site. Glu127 (proton donor/acceptor) is an active-site residue.

Belongs to the dCTP deaminase family. As to quaternary structure, homotrimer.

It carries out the reaction dCTP + H2O + H(+) = dUTP + NH4(+). Its pathway is pyrimidine metabolism; dUMP biosynthesis; dUMP from dCTP (dUTP route): step 1/2. Functionally, catalyzes the deamination of dCTP to dUTP. The protein is dCTP deaminase of Rhodopirellula baltica (strain DSM 10527 / NCIMB 13988 / SH1).